We begin with the raw amino-acid sequence, 669 residues long: Dymeclin (669 aa).

Glycine 2 carries the N-myristoyl glycine lipid modification.

This sequence belongs to the dymeclin family. As to quaternary structure, interacts with GOLM1 and PPIB. In terms of processing, myristoylated in vitro; myristoylation is not essential for protein targeting to Golgi compartment.

The protein localises to the cytoplasm. It is found in the golgi apparatus. The protein resides in the membrane. In terms of biological role, necessary for correct organization of Golgi apparatus. Involved in bone development. The protein is Dymeclin (DYM) of Pongo abelii (Sumatran orangutan).